A 257-amino-acid chain; its full sequence is Transcription factor bHLH55 (257 aa).

The bHLH domain occupies 74–126 (NKRAKHKELERQRRQENTSLFKILRYLLPSQYIKGKRSSADHVLEAVNYIKDL).

Homodimer. Expressed in roots, leaves, stems, and flowers.

Its subcellular location is the nucleus. In Arabidopsis thaliana (Mouse-ear cress), this protein is Transcription factor bHLH55 (BHLH55).